Reading from the N-terminus, the 229-residue chain is Lantibiotic transport ATP-binding protein SrtF (229 aa).

An ABC transporter domain is found at 2–225 (LKIQNLKKSY…EELFNNQILF (224 aa)). Residue 34–41 (GPNGAGKS) coordinates ATP.

The protein belongs to the ABC transporter superfamily.

Functionally, implicated in the export process of the lantibiotic SrtA. The polypeptide is Lantibiotic transport ATP-binding protein SrtF (srtF) (Streptococcus pyogenes serotype M1).